Reading from the N-terminus, the 55-residue chain is Neurotoxin BmKX-A1-S31 (55 aa).

A signal peptide spans 1-23 (MKIFFAVLVILVLFSMLIWTAYG). Cystine bridges form between Cys-30/Cys-45, Cys-36/Cys-50, and Cys-39/Cys-53.

Expressed by the venom gland.

It is found in the secreted. This Olivierus martensii (Manchurian scorpion) protein is Neurotoxin BmKX-A1-S31.